Reading from the N-terminus, the 863-residue chain is Phycobiliprotein ApcE (863 aa).

C178 lines the (2R,3E)-phycocyanobilin pocket. PBS-linker domains follow at residues 235-414, 473-652, and 671-852; these read DLQG…RFQK, PIEN…KLQP, and NNII…FILM.

This sequence belongs to the phycobilisome linker protein family. Post-translationally, contains one covalently linked bilin chromophore. This protein autochromophorylates (Potential).

Its subcellular location is the plastid. The protein resides in the chloroplast thylakoid membrane. In terms of biological role, this protein is postulated to act both as terminal energy acceptor and as a linker polypeptide that stabilizes the phycobilisome architecture. May have intrinsic bilin lyase activity. This is Phycobiliprotein ApcE (apcE) from Galdieria sulphuraria (Red alga).